The following is an 869-amino-acid chain: Aconitate hydratase B (869 aa).

Substrate-binding positions include Arg191, 244–246 (SSR), 417–419 (QDT), and Ser501. [4Fe-4S] cluster is bound by residues Cys713, Cys772, and Cys775. 2 residues coordinate substrate: Arg794 and Arg799.

The protein belongs to the aconitase/IPM isomerase family. In terms of assembly, monomer. Requires [4Fe-4S] cluster as cofactor.

The catalysed reaction is citrate = D-threo-isocitrate. It carries out the reaction (2S,3R)-3-hydroxybutane-1,2,3-tricarboxylate = 2-methyl-cis-aconitate + H2O. The protein operates within carbohydrate metabolism; tricarboxylic acid cycle; isocitrate from oxaloacetate: step 2/2. Its pathway is organic acid metabolism; propanoate degradation. Its function is as follows. Involved in the catabolism of short chain fatty acids (SCFA) via the tricarboxylic acid (TCA)(acetyl degradation route) and probably via the 2-methylcitrate cycle I (propionate degradation route). Catalyzes the reversible isomerization of citrate to isocitrate via cis-aconitate. Catalyzes the hydration of 2-methyl-cis-aconitate to yield (2R,3S)-2-methylisocitrate. The apo form of AcnB functions as a RNA-binding regulatory protein. The chain is Aconitate hydratase B (acnB) from Pseudomonas aeruginosa (strain ATCC 15692 / DSM 22644 / CIP 104116 / JCM 14847 / LMG 12228 / 1C / PRS 101 / PAO1).